The following is a 207-amino-acid chain: Protein ERP4 (207 aa).

A signal peptide spans 1–21; the sequence is MRVFTLIAILFSSSLLTHAFS. Over 22 to 174 the chain is Lumenal; sequence SNYAPVGISL…TVSSTESRLT (153 aa). The GOLD domain occupies 36–118; sequence KECLYYDLSS…PKKVEITLEK (83 aa). Residues 175 to 195 form a helical membrane-spanning segment; that stretch reads WLSLLIMGVMVGISIVQALII. The Cytoplasmic portion of the chain corresponds to 196–207; that stretch reads QFFFTSRQKNYV.

It belongs to the EMP24/GP25L family.

It is found in the endoplasmic reticulum membrane. Functionally, involved in vesicular protein trafficking. In Saccharomyces cerevisiae (strain ATCC 204508 / S288c) (Baker's yeast), this protein is Protein ERP4 (ERP4).